The chain runs to 445 residues: TNF receptor-associated factor family protein DDB_G0290971 (445 aa).

The RING-type; degenerate zinc finger occupies 23-67 (CPICFDLYYSSSSKKEVFQCRDGHLACKSCWSDSLLNKKECMICR). TRAF-type zinc fingers lie at residues 133–186 (KHQV…QLDA) and 186–242 (AHAL…ESID). Residues 269–307 (QLELVECKNQIYQINNKYEKLLERVIKLEQLSMDASNKL) are a coiled coil. The 128-residue stretch at 314–441 (KNSIIFATFS…EDKLVIGLRI (128 aa)) folds into the MATH domain.

This sequence belongs to the TNF receptor-associated factor family. A subfamily.

The protein resides in the cytoplasm. Its function is as follows. Probable adapter protein and signal transducer that links members of the tumor necrosis factor receptor family to different signaling pathways by association with the receptor cytoplasmic domain and kinases. This chain is TNF receptor-associated factor family protein DDB_G0290971, found in Dictyostelium discoideum (Social amoeba).